The sequence spans 285 residues: MKLAIPNKGRLQQPVLQFLNYVGIRPLSSDERALIIPTNWEGIQLVMLRTEDIPSLVEAGAADIGITGYDYVLESGANVDELIRLDFGKAKIVLAVPLSWDYNSPDQIKQEIRIATKYYNLAKKYITEKGIPAKVVKISGAAEVIPSLGAADAIIDVMSTGTTLKLHGLKPLDTVLETQAVVIGNRYWMKSDEADKINLMLTMMKGALYARNKKMIFMNVPDSKLNNVIQSLPAMLSPTLSKLAKGDAWEVITVIDGDKLPEIIAKVVANGARDIVVVDIEKVIK.

Belongs to the ATP phosphoribosyltransferase family. Long subfamily. Mg(2+) is required as a cofactor.

The protein localises to the cytoplasm. It carries out the reaction 1-(5-phospho-beta-D-ribosyl)-ATP + diphosphate = 5-phospho-alpha-D-ribose 1-diphosphate + ATP. It participates in amino-acid biosynthesis; L-histidine biosynthesis; L-histidine from 5-phospho-alpha-D-ribose 1-diphosphate: step 1/9. Its activity is regulated as follows. Feedback inhibited by histidine. Its function is as follows. Catalyzes the condensation of ATP and 5-phosphoribose 1-diphosphate to form N'-(5'-phosphoribosyl)-ATP (PR-ATP). Has a crucial role in the pathway because the rate of histidine biosynthesis seems to be controlled primarily by regulation of HisG enzymatic activity. The polypeptide is ATP phosphoribosyltransferase (Sulfolobus acidocaldarius (strain ATCC 33909 / DSM 639 / JCM 8929 / NBRC 15157 / NCIMB 11770)).